The chain runs to 944 residues: 2-oxoglutarate dehydrogenase E1 component (944 aa).

The tract at residues 915-944 (RRRSSPAEGDPTVHKKEQERIVSDSLTRKN) is disordered. Basic and acidic residues predominate over residues 925 to 936 (PTVHKKEQERIV).

This sequence belongs to the alpha-ketoglutarate dehydrogenase family. Homodimer. Part of the 2-oxoglutarate dehydrogenase (OGDH) complex composed of E1 (2-oxoglutarate dehydrogenase), E2 (dihydrolipoamide succinyltransferase) and E3 (dihydrolipoamide dehydrogenase); the complex contains multiple copies of the three enzymatic components (E1, E2 and E3). The cofactor is thiamine diphosphate.

The catalysed reaction is N(6)-[(R)-lipoyl]-L-lysyl-[protein] + 2-oxoglutarate + H(+) = N(6)-[(R)-S(8)-succinyldihydrolipoyl]-L-lysyl-[protein] + CO2. Functionally, E1 component of the 2-oxoglutarate dehydrogenase (OGDH) complex which catalyzes the decarboxylation of 2-oxoglutarate, the first step in the conversion of 2-oxoglutarate to succinyl-CoA and CO(2). This chain is 2-oxoglutarate dehydrogenase E1 component, found in Bacillus velezensis (strain DSM 23117 / BGSC 10A6 / LMG 26770 / FZB42) (Bacillus amyloliquefaciens subsp. plantarum).